The primary structure comprises 215 residues: uncharacterized protein (215 aa).

This is an uncharacterized protein from Escherichia coli (strain K12).